Here is a 304-residue protein sequence, read N- to C-terminus: Probable phytol kinase 2, chloroplastic (304 aa).

The N-terminal 59 residues, 1-59 (MVSLISAHLLSLPSSAPRSRPQSRPPLSPPAAAAAASCSFDLPRPRRLVADGSRRKGTM), are a transit peptide targeting the chloroplast. Transmembrane regions (helical) follow at residues 68 to 88 (SGLA…LALL), 113 to 133 (IGMV…APFL), 134 to 154 (AAVA…GVMK), 170 to 190 (ELLK…SIFW), 194 to 214 (PIAI…DIVG), 231 to 251 (AGSI…MHYF), and 256 to 276 (FIEE…TAAL).

It belongs to the polyprenol kinase family.

It localises to the plastid. The protein resides in the chloroplast membrane. The enzyme catalyses phytol + CTP = phytyl phosphate + CDP + H(+). It participates in cofactor biosynthesis; tocopherol biosynthesis. Functionally, involved in the activation and reutilization of phytol from chlorophyll degradation in plant metabolism, including tocopherol biosynthesis. Catalyzes the conversion of phytol to phytol monophosphate (PMP). The sequence is that of Probable phytol kinase 2, chloroplastic from Oryza sativa subsp. japonica (Rice).